The chain runs to 354 residues: Anthranilate phosphoribosyltransferase (354 aa).

Residues G94, 97–98, T102, 104–107, 122–130, and S134 each bind 5-phospho-alpha-D-ribose 1-diphosphate; these read GD, NIST, and KHGNRAASS. G94 serves as a coordination point for anthranilate. Residue S106 participates in Mg(2+) binding. N125 is a binding site for anthranilate. Residue R180 participates in anthranilate binding. D238 and E239 together coordinate Mg(2+).

Belongs to the anthranilate phosphoribosyltransferase family. As to quaternary structure, homodimer. Mg(2+) serves as cofactor.

It carries out the reaction N-(5-phospho-beta-D-ribosyl)anthranilate + diphosphate = 5-phospho-alpha-D-ribose 1-diphosphate + anthranilate. Its pathway is amino-acid biosynthesis; L-tryptophan biosynthesis; L-tryptophan from chorismate: step 2/5. In terms of biological role, catalyzes the transfer of the phosphoribosyl group of 5-phosphorylribose-1-pyrophosphate (PRPP) to anthranilate to yield N-(5'-phosphoribosyl)-anthranilate (PRA). This Streptomyces avermitilis (strain ATCC 31267 / DSM 46492 / JCM 5070 / NBRC 14893 / NCIMB 12804 / NRRL 8165 / MA-4680) protein is Anthranilate phosphoribosyltransferase.